A 128-amino-acid chain; its full sequence is Large ribosomal subunit protein uL22 (128 aa).

This sequence belongs to the universal ribosomal protein uL22 family. As to quaternary structure, part of the 50S ribosomal subunit.

This protein binds specifically to 23S rRNA; its binding is stimulated by other ribosomal proteins, e.g. L4, L17, and L20. It is important during the early stages of 50S assembly. It makes multiple contacts with different domains of the 23S rRNA in the assembled 50S subunit and ribosome. Its function is as follows. The globular domain of the protein is located near the polypeptide exit tunnel on the outside of the subunit, while an extended beta-hairpin is found that lines the wall of the exit tunnel in the center of the 70S ribosome. This is Large ribosomal subunit protein uL22 from Methylocella silvestris (strain DSM 15510 / CIP 108128 / LMG 27833 / NCIMB 13906 / BL2).